Reading from the N-terminus, the 49-residue chain is uncharacterized protein (49 aa).

Residues 22–42 form a helical membrane-spanning segment; it reads AIVGISIMIIIAIGIYLIIEY.

The protein resides in the membrane. This is an uncharacterized protein from Methanocaldococcus jannaschii (strain ATCC 43067 / DSM 2661 / JAL-1 / JCM 10045 / NBRC 100440) (Methanococcus jannaschii).